Here is a 102-residue protein sequence, read N- to C-terminus: Putative pterin-4-alpha-carbinolamine dehydratase (102 aa).

This sequence belongs to the pterin-4-alpha-carbinolamine dehydratase family.

The enzyme catalyses (4aS,6R)-4a-hydroxy-L-erythro-5,6,7,8-tetrahydrobiopterin = (6R)-L-erythro-6,7-dihydrobiopterin + H2O. This is Putative pterin-4-alpha-carbinolamine dehydratase from Burkholderia vietnamiensis (strain G4 / LMG 22486) (Burkholderia cepacia (strain R1808)).